The primary structure comprises 687 residues: Homeobox-leucine zipper protein HDG12 (687 aa).

The tract at residues 1-32 (MEFLGDSQNHDSSETEKKNKKKKRFHRHTPHQ) is disordered. Over residues 8–17 (QNHDSSETEK) the composition is skewed to basic and acidic residues. Over residues 18 to 30 (KNKKKKRFHRHTP) the composition is skewed to basic residues. Residues 21–80 (KKKRFHRHTPHQIQRLESTFNECQHPDEKQRNQLSRELGLAPRQIKFWFQNRRTQKKAQH) constitute a DNA-binding region (homeobox). The stretch at 87–150 (ALKEENDKIR…LERVSSIAAK (64 aa)) forms a coiled coil. In terms of domain architecture, START spans 206-440 (SEMDKSLMTN…LQRMCERFTN (235 aa)).

The protein belongs to the HD-ZIP homeobox family. Class IV subfamily. Interacts with BBM. In terms of tissue distribution, expressed in apical meristems and young epidermal tissue including trichomes and stipules. Expressed in lateral root tips, the L1 layer of apical inflorescence meristems and early flower primordia, carpel and stamen filament epidermis, stigma papillae, ovule primordia, nucellus and embryo.

It is found in the nucleus. In terms of biological role, probable transcription factor that acts as a negative regulator of trichome branching in association with HDG11. Seems to promote cell differentiation. May regulate cell differentiation and proliferation during root and shoot meristem development. Acts as a positive regulator of SCL18/LAS expression. Involved, together with PDF2, in the regulation of flower organs development by promoting the expression of APETALA 3 (AP3) in the epidermis and internal cell layers of developing flowers. The sequence is that of Homeobox-leucine zipper protein HDG12 from Arabidopsis thaliana (Mouse-ear cress).